Here is a 392-residue protein sequence, read N- to C-terminus: Pyruvate synthase subunit PorA (392 aa).

In terms of assembly, heterotetramer of one alpha, one beta, one delta and one gamma chain.

It catalyses the reaction 2 oxidized [2Fe-2S]-[ferredoxin] + pyruvate + CoA = 2 reduced [2Fe-2S]-[ferredoxin] + acetyl-CoA + CO2 + H(+). This chain is Pyruvate synthase subunit PorA (porA), found in Thermotoga maritima (strain ATCC 43589 / DSM 3109 / JCM 10099 / NBRC 100826 / MSB8).